A 345-amino-acid chain; its full sequence is D-amino-acid oxidase (345 aa).

Residues Ser10, Ile13, Ser49, Gly53, and Asn55 each contribute to the FAD site. Residues Tyr230 and Arg290 each contribute to the (R)-lactate site. Residues Tyr230 and Arg290 each contribute to the anthranilate site. The FAD site is built by Arg290, Ser317, Gly320, Tyr321, and Gln322. Residues 343-345 (AKL) carry the Microbody targeting signal motif.

This sequence belongs to the DAMOX/DASOX family. Requires FAD as cofactor.

It is found in the peroxisome matrix. The enzyme catalyses a D-alpha-amino acid + O2 + H2O = a 2-oxocarboxylate + H2O2 + NH4(+). It catalyses the reaction D-methionine + O2 + H2O = 4-methylsulfanyl-2-oxobutanoate + H2O2 + NH4(+). Catalyzes the oxidative deamination of D-amino acids with broad substrate specificity. Enables the organism to utilize D-amino acids as a source of nutrients. Enables the organism to utilize D-alanine as a nitrogen source, although it is not strictly required for this process. Also enables utilization of D-alanine as a carbon source. The protein is D-amino-acid oxidase of Candida boidinii (Yeast).